The chain runs to 642 residues: Threonine--tRNA ligase (642 aa).

One can recognise a TGS domain in the interval 1–61 (MPVITLPDGS…ENDATLSIIT (61 aa)). A catalytic region spans residues 243-534 (DHRKIGKQLD…LTEEFAGFFP (292 aa)). Residues cysteine 334, histidine 385, and histidine 511 each coordinate Zn(2+).

This sequence belongs to the class-II aminoacyl-tRNA synthetase family. As to quaternary structure, homodimer. Requires Zn(2+) as cofactor.

The protein resides in the cytoplasm. The catalysed reaction is tRNA(Thr) + L-threonine + ATP = L-threonyl-tRNA(Thr) + AMP + diphosphate + H(+). Functionally, catalyzes the attachment of threonine to tRNA(Thr) in a two-step reaction: L-threonine is first activated by ATP to form Thr-AMP and then transferred to the acceptor end of tRNA(Thr). Also edits incorrectly charged L-seryl-tRNA(Thr). In Salmonella heidelberg (strain SL476), this protein is Threonine--tRNA ligase.